Consider the following 84-residue polypeptide: Small ribosomal subunit protein uS17 (84 aa).

This sequence belongs to the universal ribosomal protein uS17 family. In terms of assembly, part of the 30S ribosomal subunit.

Its function is as follows. One of the primary rRNA binding proteins, it binds specifically to the 5'-end of 16S ribosomal RNA. The polypeptide is Small ribosomal subunit protein uS17 (Borrelia recurrentis (strain A1)).